A 1299-amino-acid polypeptide reads, in one-letter code: Probable membrane antigen 75 (1299 aa).

The protein localises to the virion tegument. This Saimiriine herpesvirus 2 (strain 11) (SaHV-2) protein is Probable membrane antigen 75 (75).